A 390-amino-acid chain; its full sequence is Pyruvate dehydrogenase E1 component subunit alpha, somatic form, mitochondrial (390 aa).

Residues 1–29 (MRKMLAAVSRVLSGASQKPASRVLVASRN) constitute a mitochondrion transit peptide. Lys63 carries the post-translational modification N6-acetyllysine; alternate. Residue Lys63 is modified to N6-succinyllysine; alternate. Positions 92, 118, 119, 157, 165, 167, 196, 197, 198, 225, and 227 each coordinate pyruvate. Residues Tyr118 and Arg119 each contribute to the thiamine diphosphate site. Thiamine diphosphate contacts are provided by Gly165, Val167, Asp196, Gly197, Ala198, and Asn225. Position 196 (Asp196) interacts with Mg(2+). Residues Asn225 and Tyr227 each coordinate Mg(2+). Ser232 is modified (phosphoserine; by PDK1). Position 244 is an N6-acetyllysine; alternate (Lys244). N6-succinyllysine; alternate is present on Lys244. Lys277 bears the N6-succinyllysine mark. His292 contributes to the thiamine diphosphate binding site. Ser293 is modified (phosphoserine; by PDK1, PDK2, PDK3 and PDK4). Residue Ser295 is modified to Phosphoserine. Ser300 carries the post-translational modification Phosphoserine; by PDK1, PDK2, PDK3 and PDK4. Phosphotyrosine is present on Tyr301. The residue at position 313 (Lys313) is an N6-acetyllysine; alternate. Lys313 carries the post-translational modification N6-succinyllysine; alternate. 2 positions are modified to N6-acetyllysine: Lys321 and Lys336. Residue Lys385 is modified to N6-succinyllysine.

Heterotetramer of two PDHA1 and two PDHB subunits. The heterotetramer interacts with DLAT, and is part of the multimeric pyruvate dehydrogenase complex that contains multiple copies of pyruvate dehydrogenase (E1), dihydrolipoamide acetyltransferase (DLAT, E2) and lipoamide dehydrogenase (DLD, E3). These subunits are bound to an inner core composed of about 48 DLAT and 12 PDHX molecules. The cofactor is thiamine diphosphate. It depends on Mg(2+) as a cofactor. Phosphorylation at Ser-232, Ser-293 and Ser-300 by PDK family kinases inactivates the enzyme; for this phosphorylation at a single site is sufficient. Dephosphorylation at all three sites, i.e. at Ser-232, Ser-293 and Ser-300, is required for reactivation. In terms of processing, acetylation alters the phosphorylation pattern. Deacetylated by SIRT3. As to expression, ubiquitous.

The protein resides in the mitochondrion matrix. It catalyses the reaction N(6)-[(R)-lipoyl]-L-lysyl-[protein] + pyruvate + H(+) = N(6)-[(R)-S(8)-acetyldihydrolipoyl]-L-lysyl-[protein] + CO2. Pyruvate dehydrogenase activity is inhibited by phosphorylation of PDHA1; it is reactivated by dephosphorylation. In terms of biological role, the pyruvate dehydrogenase complex catalyzes the overall conversion of pyruvate to acetyl-CoA and CO(2), and thereby links the glycolytic pathway to the tricarboxylic cycle. The protein is Pyruvate dehydrogenase E1 component subunit alpha, somatic form, mitochondrial (PDHA1) of Homo sapiens (Human).